Here is a 95-residue protein sequence, read N- to C-terminus: Small ribosomal subunit protein uS19 (95 aa).

The tract at residues 76 to 95 is disordered; sequence PTRRFGGHADKKAKKGELKK. The span at 82-95 shows a compositional bias: basic and acidic residues; that stretch reads GHADKKAKKGELKK.

This sequence belongs to the universal ribosomal protein uS19 family.

Protein S19 forms a complex with S13 that binds strongly to the 16S ribosomal RNA. The chain is Small ribosomal subunit protein uS19 from Thermotoga neapolitana (strain ATCC 49049 / DSM 4359 / NBRC 107923 / NS-E).